Consider the following 62-residue polypeptide: Conotoxin TxIC (62 aa).

An N-terminal signal peptide occupies residues 1 to 22; it reads MHCLPIFVILLLLTASGPSVDA. The propeptide occupies 23–47; sequence QLKTKDDVPLSSFRDHAKSTLRRLQ. Disulfide bonds link Cys-52-Cys-58 and Cys-53-Cys-61. Pro-60 is modified (4-hydroxyproline). Cys-61 bears the Cysteine amide mark.

The protein belongs to the conotoxin A superfamily. In terms of tissue distribution, expressed by the venom duct.

The protein resides in the secreted. This is Conotoxin TxIC from Conus textile (Cloth-of-gold cone).